Consider the following 354-residue polypeptide: Uroporphyrinogen decarboxylase (354 aa).

Substrate-binding positions include 27 to 31, D77, Y154, T209, and H327; that span reads RQAGR.

It belongs to the uroporphyrinogen decarboxylase family. In terms of assembly, homodimer.

It localises to the cytoplasm. The enzyme catalyses uroporphyrinogen III + 4 H(+) = coproporphyrinogen III + 4 CO2. It participates in porphyrin-containing compound metabolism; protoporphyrin-IX biosynthesis; coproporphyrinogen-III from 5-aminolevulinate: step 4/4. Its function is as follows. Catalyzes the decarboxylation of four acetate groups of uroporphyrinogen-III to yield coproporphyrinogen-III. The sequence is that of Uroporphyrinogen decarboxylase from Salmonella agona (strain SL483).